A 43-amino-acid polypeptide reads, in one-letter code: Protein PsbN (43 aa).

Residues 5–27 (TLVTIFISGSLVSFTGYALYTAF) traverse the membrane as a helical segment.

This sequence belongs to the PsbN family.

The protein resides in the plastid. The protein localises to the chloroplast thylakoid membrane. In terms of biological role, may play a role in photosystem I and II biogenesis. This Piper cenocladum (Ant piper) protein is Protein PsbN.